The primary structure comprises 409 residues: Forkhead box protein A2 (409 aa).

The segment at residues 150–241 (AKPPYSYISL…GNMFENGCYL (92 aa)) is a DNA-binding region (fork-head). Positions 250 to 262 (DKKLSKDPSRKTS) are enriched in basic and acidic residues. Residues 250–315 (DKKLSKDPSR…AASPTSQAQH (66 aa)) are disordered. Low complexity predominate over residues 263-286 (EGGSNSSSESCNGNESPHSNSSSN).

The protein localises to the nucleus. May play a crucial role in specification of both the axial mesendoderm and the ventral nervous system. The protein is Forkhead box protein A2 (foxa2) of Danio rerio (Zebrafish).